Here is a 196-residue protein sequence, read N- to C-terminus: UPF0301 protein BT_1078 (196 aa).

This sequence belongs to the UPF0301 (AlgH) family.

The protein is UPF0301 protein BT_1078 of Bacteroides thetaiotaomicron (strain ATCC 29148 / DSM 2079 / JCM 5827 / CCUG 10774 / NCTC 10582 / VPI-5482 / E50).